Consider the following 227-residue polypeptide: Lipoprotein-releasing system ATP-binding protein LolD (227 aa).

The region spanning 7–227 (LQLTGVERHY…TISDGKIVDF (221 aa)) is the ABC transporter domain. 43–50 (APSGTGKS) provides a ligand contact to ATP.

The protein belongs to the ABC transporter superfamily. Lipoprotein translocase (TC 3.A.1.125) family. As to quaternary structure, the complex is composed of two ATP-binding proteins (LolD) and two transmembrane proteins (LolC and LolE).

It is found in the cell inner membrane. Functionally, part of the ABC transporter complex LolCDE involved in the translocation of mature outer membrane-directed lipoproteins, from the inner membrane to the periplasmic chaperone, LolA. Responsible for the formation of the LolA-lipoprotein complex in an ATP-dependent manner. This Rhizobium johnstonii (strain DSM 114642 / LMG 32736 / 3841) (Rhizobium leguminosarum bv. viciae) protein is Lipoprotein-releasing system ATP-binding protein LolD.